Reading from the N-terminus, the 231-residue chain is Potassium/proton antiporter CemA (231 aa).

Helical transmembrane passes span 9–29 (FIPL…SFLF), 116–136 (IICF…LIIL), and 191–211 (IISG…KYWI).

Belongs to the CemA family.

The protein resides in the plastid. The protein localises to the chloroplast inner membrane. It catalyses the reaction K(+)(in) + H(+)(out) = K(+)(out) + H(+)(in). In terms of biological role, contributes to K(+)/H(+) antiport activity by supporting proton efflux to control proton extrusion and homeostasis in chloroplasts in a light-dependent manner to modulate photosynthesis. Prevents excessive induction of non-photochemical quenching (NPQ) under continuous-light conditions. Indirectly promotes efficient inorganic carbon uptake into chloroplasts. This Manihot esculenta (Cassava) protein is Potassium/proton antiporter CemA.